Here is a 682-residue protein sequence, read N- to C-terminus: PWWP domain-containing DNA repair factor 3A (682 aa).

At S105 the chain carries Phosphoserine. The interval 121–145 (EKTDADVASQVSSAPSPSLLGEDGQ) is disordered. The segment covering 127–140 (VASQVSSAPSPSLL) has biased composition (low complexity). S168 is modified (phosphoserine). Disordered stretches follow at residues 179–318 (GPKT…GAAP) and 334–369 (GAGD…EEEP). Residues 203–220 (HGQESTTKKRQRNLGEKP) show a composition bias toward basic and acidic residues. Phosphoserine occurs at positions 345 and 346. Polar residues predominate over residues 346 to 357 (SEESTGFKSTHS). A PWWP domain is found at 383 to 444 (VGMLVWLKYQ…KHFDCKEKHA (62 aa)).

This sequence belongs to the PWWP3A family. Interacts with TP53BP1 (via BRCT domain); the interaction is not dependent on its phosphorylation status. Binds nucleosomes. Interacts with trimethylated 'Lys-36' of histone H3 (H3K36me3) (in vitro).

The protein resides in the nucleus. Involved in the DNA damage response pathway by contributing to the maintenance of chromatin architecture. Recruited to the vicinity of DNA breaks by TP53BP1 and plays an accessory role to facilitate damage-induced chromatin changes and promoting chromatin relaxation. Required for efficient DNA repair and cell survival following DNA damage. The protein is PWWP domain-containing DNA repair factor 3A (Pwwp3a) of Mus musculus (Mouse).